The chain runs to 258 residues: AAGRGAWVRTWAPLAMAAKVDLSTSTDWKEAKSFLKGLSDKQREEHYFCKDFIKLKKIPMWKETAKGLAGKVENPKYKKDKQLNEKISLFRGDITKLEVDAIVNAANNSLLGGGGVDGCIHRAAGSLLTDECRTLQNCETGKAKITCGYRLPAKHVIHTVGPIAVGQPTASQAAELRSCYLSSLDLLLEHRLRSVAFPCISTGVFGYPNEEAAEVVLATLREWLEQHKDKVDRLIICVFLEKDEGIYQERLPHYFPVA.

Residues Lys29, Lys36, and Lys62 each carry the N6-succinyllysine modification. A Glycyl lysine isopeptide (Lys-Gly) (interchain with G-Cter in SUMO2) cross-link involves residue Lys71. The region spanning Asn74–Phe255 is the Macro domain. Gly92–Ile94 lines the substrate pocket. Residue Lys96 is modified to N6-acetyllysine. Residues Ala105–Asn107, Gly112–Asp117, Ile200–Gly206, and Phe239 each bind substrate.

This sequence belongs to the MacroD-type family. MacroD1/2-like subfamily. As to quaternary structure, interacts with ESR1; Interacts in a manner that is estrogen independent but is enhanced by estrogen. Interacts (via macro domain) with AR.

It is found in the nucleus. It catalyses the reaction 3''-O-acetyl-ADP-D-ribose + H2O = ADP-D-ribose + acetate + H(+). The enzyme catalyses 2''-O-acetyl-ADP-D-ribose + H2O = ADP-D-ribose + acetate + H(+). It carries out the reaction 4-O-(ADP-D-ribosyl)-L-aspartyl-[protein] + H2O = L-aspartyl-[protein] + ADP-D-ribose + H(+). The catalysed reaction is 5-O-(ADP-D-ribosyl)-L-glutamyl-[protein] + H2O = L-glutamyl-[protein] + ADP-D-ribose + H(+). It catalyses the reaction alpha-NAD(+) + H2O = ADP-D-ribose + nicotinamide + H(+). Subject to competitive inhibition by the product ADP-ribose. Functionally, removes ADP-ribose from aspartate and glutamate residues in proteins bearing a single ADP-ribose moiety. Inactive towards proteins bearing poly-ADP-ribose. Deacetylates O-acetyl-ADP ribose, a signaling molecule generated by the deacetylation of acetylated lysine residues in histones and other proteins. Plays a role in estrogen signaling. Binds to androgen receptor (AR) and amplifies the transactivation function of AR in response to androgen. May play an important role in carcinogenesis and/or progression of hormone-dependent cancers by feed-forward mechanism that activates ESR1 transactivation. Could be an ESR1 coactivator, providing a positive feedback regulatory loop for ESR1 signal transduction. Could be involved in invasive growth by down-regulating CDH1 in endometrial cancer cells. Enhances ESR1-mediated transcription activity. The chain is ADP-ribose glycohydrolase MACROD1 (Macrod1) from Rattus norvegicus (Rat).